The following is a 341-amino-acid chain: tRNA N6-adenosine threonylcarbamoyltransferase (341 aa).

Fe cation is bound by residues H111 and H115. Residues 133–137 (VVSGG), D166, G179, D183, and N271 each bind substrate. Fe cation is bound at residue D299.

The protein belongs to the KAE1 / TsaD family. Fe(2+) is required as a cofactor.

Its subcellular location is the cytoplasm. It catalyses the reaction L-threonylcarbamoyladenylate + adenosine(37) in tRNA = N(6)-L-threonylcarbamoyladenosine(37) in tRNA + AMP + H(+). In terms of biological role, required for the formation of a threonylcarbamoyl group on adenosine at position 37 (t(6)A37) in tRNAs that read codons beginning with adenine. Is involved in the transfer of the threonylcarbamoyl moiety of threonylcarbamoyl-AMP (TC-AMP) to the N6 group of A37, together with TsaE and TsaB. TsaD likely plays a direct catalytic role in this reaction. The chain is tRNA N6-adenosine threonylcarbamoyltransferase from Fusobacterium nucleatum subsp. nucleatum (strain ATCC 25586 / DSM 15643 / BCRC 10681 / CIP 101130 / JCM 8532 / KCTC 2640 / LMG 13131 / VPI 4355).